A 243-amino-acid polypeptide reads, in one-letter code: Large ribosomal subunit protein uL2 (243 aa).

Basic residues predominate over residues 1–12 (MGRRIQGQRRGR). 2 disordered regions span residues 1–38 (MGRRIQGQRRGRGTSTFRAPSHRYKAELSHKQSESDDT) and 198–243 (VDHP…GSSE). Composition is skewed to basic and acidic residues over residues 24 to 34 (YKAELSHKQSE) and 221 to 231 (PPGRKVGDIAS).

This sequence belongs to the universal ribosomal protein uL2 family. In terms of assembly, part of the 50S ribosomal subunit. Forms a bridge to the 30S subunit in the 70S ribosome.

Its function is as follows. One of the primary rRNA binding proteins. Required for association of the 30S and 50S subunits to form the 70S ribosome, for tRNA binding and peptide bond formation. It has been suggested to have peptidyltransferase activity; this is somewhat controversial. Makes several contacts with the 16S rRNA in the 70S ribosome. The sequence is that of Large ribosomal subunit protein uL2 from Haloquadratum walsbyi (strain DSM 16790 / HBSQ001).